The sequence spans 46 residues: Defensin Tk-AMP-D5 (46 aa).

4 disulfide bridges follow: Cys-3/Cys-46, Cys-14/Cys-34, Cys-20/Cys-40, and Cys-24/Cys-42.

Its function is as follows. Plant defense peptide. This chain is Defensin Tk-AMP-D5, found in Triticum kiharae (Wheat).